We begin with the raw amino-acid sequence, 146 residues long: D-aminoacyl-tRNA deacylase (146 aa).

Positions 137–138 (GP) match the Gly-cisPro motif, important for rejection of L-amino acids motif.

Belongs to the DTD family. In terms of assembly, homodimer.

The protein resides in the cytoplasm. The catalysed reaction is glycyl-tRNA(Ala) + H2O = tRNA(Ala) + glycine + H(+). The enzyme catalyses a D-aminoacyl-tRNA + H2O = a tRNA + a D-alpha-amino acid + H(+). In terms of biological role, an aminoacyl-tRNA editing enzyme that deacylates mischarged D-aminoacyl-tRNAs. Also deacylates mischarged glycyl-tRNA(Ala), protecting cells against glycine mischarging by AlaRS. Acts via tRNA-based rather than protein-based catalysis; rejects L-amino acids rather than detecting D-amino acids in the active site. By recycling D-aminoacyl-tRNA to D-amino acids and free tRNA molecules, this enzyme counteracts the toxicity associated with the formation of D-aminoacyl-tRNA entities in vivo and helps enforce protein L-homochirality. In Cellvibrio japonicus (strain Ueda107) (Pseudomonas fluorescens subsp. cellulosa), this protein is D-aminoacyl-tRNA deacylase.